Here is a 214-residue protein sequence, read N- to C-terminus: Probable nicotinate-nucleotide adenylyltransferase (214 aa).

It belongs to the NadD family.

It catalyses the reaction nicotinate beta-D-ribonucleotide + ATP + H(+) = deamido-NAD(+) + diphosphate. The protein operates within cofactor biosynthesis; NAD(+) biosynthesis; deamido-NAD(+) from nicotinate D-ribonucleotide: step 1/1. Its function is as follows. Catalyzes the reversible adenylation of nicotinate mononucleotide (NaMN) to nicotinic acid adenine dinucleotide (NaAD). This chain is Probable nicotinate-nucleotide adenylyltransferase, found in Pseudomonas fluorescens (strain ATCC BAA-477 / NRRL B-23932 / Pf-5).